Reading from the N-terminus, the 307-residue chain is ATP synthase gamma chain (307 aa).

The protein belongs to the ATPase gamma chain family. In terms of assembly, F-type ATPases have 2 components, CF(1) - the catalytic core - and CF(0) - the membrane proton channel. CF(1) has five subunits: alpha(3), beta(3), gamma(1), delta(1), epsilon(1). CF(0) has three main subunits: a, b and c.

It localises to the cell membrane. In terms of biological role, produces ATP from ADP in the presence of a proton gradient across the membrane. The gamma chain is believed to be important in regulating ATPase activity and the flow of protons through the CF(0) complex. The chain is ATP synthase gamma chain from Bifidobacterium longum subsp. infantis (strain ATCC 15697 / DSM 20088 / JCM 1222 / NCTC 11817 / S12).